We begin with the raw amino-acid sequence, 430 residues long: Adenylosuccinate synthetase (430 aa).

GTP contacts are provided by residues 12 to 18 (GDEGKGK) and 40 to 42 (GHT). The Proton acceptor role is filled by Asp13. Mg(2+) is bound by residues Asp13 and Gly40. IMP is bound by residues 13-16 (DEGK), 38-41 (NAGH), Thr128, Arg142, Gln223, Thr238, and Arg302. Catalysis depends on His41, which acts as the Proton donor. A substrate-binding site is contributed by 298-304 (TTTGRPR). GTP-binding positions include Arg304, 330–332 (SID), and 413–415 (SVG).

Belongs to the adenylosuccinate synthetase family. As to quaternary structure, homodimer. Mg(2+) is required as a cofactor.

The protein resides in the cytoplasm. It carries out the reaction IMP + L-aspartate + GTP = N(6)-(1,2-dicarboxyethyl)-AMP + GDP + phosphate + 2 H(+). It functions in the pathway purine metabolism; AMP biosynthesis via de novo pathway; AMP from IMP: step 1/2. Its function is as follows. Plays an important role in the de novo pathway of purine nucleotide biosynthesis. Catalyzes the first committed step in the biosynthesis of AMP from IMP. The sequence is that of Adenylosuccinate synthetase from Lactococcus lactis subsp. cremoris (strain MG1363).